Reading from the N-terminus, the 117-residue chain is Putative pterin-4-alpha-carbinolamine dehydratase (117 aa).

The protein belongs to the pterin-4-alpha-carbinolamine dehydratase family.

The enzyme catalyses (4aS,6R)-4a-hydroxy-L-erythro-5,6,7,8-tetrahydrobiopterin = (6R)-L-erythro-6,7-dihydrobiopterin + H2O. This chain is Putative pterin-4-alpha-carbinolamine dehydratase, found in Colwellia psychrerythraea (strain 34H / ATCC BAA-681) (Vibrio psychroerythus).